Consider the following 514-residue polypeptide: 1-pyrroline-5-carboxylate dehydrogenase (514 aa).

Active-site residues include E286 and C320.

This sequence belongs to the aldehyde dehydrogenase family. RocA subfamily.

It carries out the reaction L-glutamate 5-semialdehyde + NAD(+) + H2O = L-glutamate + NADH + 2 H(+). Its pathway is amino-acid degradation; L-proline degradation into L-glutamate; L-glutamate from L-proline: step 2/2. This is 1-pyrroline-5-carboxylate dehydrogenase from Staphylococcus saprophyticus subsp. saprophyticus (strain ATCC 15305 / DSM 20229 / NCIMB 8711 / NCTC 7292 / S-41).